A 368-amino-acid polypeptide reads, in one-letter code: Glutamate 5-kinase (368 aa).

Residue lysine 9 coordinates ATP. Substrate contacts are provided by serine 49, aspartate 136, and asparagine 148. Residues 168–169 (TD) and 210–216 (TGGMMTK) contribute to the ATP site. A PUA domain is found at 275–353 (AGIITIDNGA…ADIENVLGYE (79 aa)).

The protein belongs to the glutamate 5-kinase family.

It is found in the cytoplasm. It catalyses the reaction L-glutamate + ATP = L-glutamyl 5-phosphate + ADP. It participates in amino-acid biosynthesis; L-proline biosynthesis; L-glutamate 5-semialdehyde from L-glutamate: step 1/2. Its function is as follows. Catalyzes the transfer of a phosphate group to glutamate to form L-glutamate 5-phosphate. This Haemophilus influenzae (strain ATCC 51907 / DSM 11121 / KW20 / Rd) protein is Glutamate 5-kinase.